We begin with the raw amino-acid sequence, 306 residues long: Porphobilinogen deaminase (306 aa).

Cys-237 bears the S-(dipyrrolylmethanemethyl)cysteine mark.

This sequence belongs to the HMBS family. As to quaternary structure, monomer. Dipyrromethane is required as a cofactor.

The enzyme catalyses 4 porphobilinogen + H2O = hydroxymethylbilane + 4 NH4(+). Its pathway is porphyrin-containing compound metabolism; protoporphyrin-IX biosynthesis; coproporphyrinogen-III from 5-aminolevulinate: step 2/4. Tetrapolymerization of the monopyrrole PBG into the hydroxymethylbilane pre-uroporphyrinogen in several discrete steps. The sequence is that of Porphobilinogen deaminase from Syntrophus aciditrophicus (strain SB).